The following is a 507-amino-acid chain: F-box only protein 31 (507 aa).

The tract at residues 19–42 (RQQRRGPAETAAADSEADTDPEEE) is disordered. Position 33 is a phosphoserine (S33). The span at 33–42 (SEADTDPEEE) shows a compositional bias: acidic residues. T37 carries the post-translational modification Phosphothreonine. The short motif at 50 to 55 (RCSLLE) is the D box element. The F-box domain maps to 50-96 (RCSLLELPPELLVEIFASLPGTDLPSLAQVCSRFRRILHTDTIWRRR). The Zn(2+) site is built by C192, H200, C216, and H222. Phosphoserine; by ATM is present on S264. A DDL motif motif is present at residues 283 to 285 (DDL). Residues 366–417 (EQEAGEGAAPPREPSAKAADGPPAKDGKEPGGGAEAAEQSASSGQGQPFVLP) are disordered. Residues 400–412 (EAAEQSASSGQGQ) are compositionally biased toward low complexity. At S448 the chain carries Phosphoserine.

The protein belongs to the FBXO31 family. Part of a SCF (SKP1-cullin-F-box) protein ligase complex SCF(FBXO31) composed of CUL1, SKP1, RBX1 and FBXO31. Interacts (when phosphorylated at Ser-33) with CDC20, promoting ubiquitination by the APC/C complex. Phosphorylation at Ser-264 by ATM following gamma-irradiation results in its stabilization. Phosphorylation at Ser-448 in absence of stress promotes its ubiquitination and degradation by the SCF(FBXO46) complex. Phosphorylation at Ser-33 by AKT1 promotes association with CDC20 and ubiquitination by the APC/C complex. In terms of processing, ubiquitinated by the SCF(FBXO46) complex in absence of stress, promoting its degradation. Ubiquitinated by the APC/C complex following phosphorylation at Ser-33, leading to its degradation by the proteasome.

Its subcellular location is the cytoplasm. The protein localises to the cytoskeleton. The protein resides in the microtubule organizing center. It localises to the centrosome. Its pathway is protein modification; protein ubiquitination. Its function is as follows. Substrate-recognition component of the SCF(FBXO31) protein ligase complex, which specifically mediates the ubiquitination of proteins amidated at their C-terminus in response to oxidative stress, leading to their degradation by the proteasome. FBXO31 specifically recognizes and binds C-terminal peptides bearing an amide: C-terminal amidation in response to oxidative stress takes place following protein fragmentation. The SCF(FBXO31) also plays a role in G1 arrest following DNA damage by mediating ubiquitination of phosphorylated cyclin-D1 (CCND1), promoting its degradation by the proteasome, resulting in G1 arrest. The SCF(FBXO31) complex is however not a major regulator of CCND1 stability during the G1/S transition. In response to genotoxic stress, the SCF(FBXO31) complex directs ubiquitination and degradation of phosphorylated MDM2, thereby promoting p53/TP53-mediated DNA damage response. SCF(FBXO31) complex is required for genomic integrity by catalyzing ubiquitination and degradation of cyclin-A (CCNA1 and/or CCNA2) during the G1 phase. In response to genotoxic stress, the SCF(FBXO31) complex directs ubiquitination and degradation of phosphorylated FBXO46 and MAP2K6. SCF(FBXO31) complex promotes ubiquitination and degradation of CDT1 during the G2 phase to prevent re-replication. The SCF(FBXO31) complex also mediates ubiquitination and degradation of DUSP6, OGT and PARD6A. This Mus musculus (Mouse) protein is F-box only protein 31.